Consider the following 259-residue polypeptide: 3-deoxy-manno-octulosonate cytidylyltransferase (259 aa).

The protein belongs to the KdsB family.

Its subcellular location is the cytoplasm. The enzyme catalyses 3-deoxy-alpha-D-manno-oct-2-ulosonate + CTP = CMP-3-deoxy-beta-D-manno-octulosonate + diphosphate. The protein operates within nucleotide-sugar biosynthesis; CMP-3-deoxy-D-manno-octulosonate biosynthesis; CMP-3-deoxy-D-manno-octulosonate from 3-deoxy-D-manno-octulosonate and CTP: step 1/1. Its pathway is bacterial outer membrane biogenesis; lipopolysaccharide biosynthesis. Its function is as follows. Activates KDO (a required 8-carbon sugar) for incorporation into bacterial lipopolysaccharide in Gram-negative bacteria. This Maricaulis maris (strain MCS10) (Caulobacter maris) protein is 3-deoxy-manno-octulosonate cytidylyltransferase.